The chain runs to 1108 residues: Valine--tRNA ligase, mitochondrial 1 (1108 aa).

A mitochondrion-targeting transit peptide spans 1–46; the sequence is MSLLFLRRAKPLFVSCCSATHSRSSFLSPTLTNQLVRSFHGSRTMS. Residues 57–93 are compositionally biased toward basic and acidic residues; the sequence is ELERKKKKEEKAKEKELKKQKALEKERLAELKAKQAK. The disordered stretch occupies residues 57–138; it reads ELERKKKKEE…RKRLSSQMAK (82 aa). A 'HIGH' region motif is present at residues 177–187; the sequence is PNVTGALHIGH. The short motif at 695 to 699 is the 'KMSKS' region element; sequence KMSKS. ATP is bound at residue lysine 698. A coiled-coil region spans residues 1032 to 1064; that stretch reads AINTEAEQEKIRNKIGELQKQKEKLQKMMSVST.

It belongs to the class-I aminoacyl-tRNA synthetase family.

It localises to the mitochondrion. The protein resides in the cytoplasm. The protein localises to the cytosol. The catalysed reaction is tRNA(Val) + L-valine + ATP = L-valyl-tRNA(Val) + AMP + diphosphate. Its function is as follows. Required for embryo development and seed viability. The polypeptide is Valine--tRNA ligase, mitochondrial 1 (Arabidopsis thaliana (Mouse-ear cress)).